A 62-amino-acid polypeptide reads, in one-letter code: ATP synthase subunit K, mitochondrial (62 aa).

The helical transmembrane segment at 14-30 threads the bilayer; the sequence is HHLAIATIGTVVALVAP.

F-type ATP synthases have 2 components, the catalytic core F(1) and the membrane-embedded component F(0), linked together by a central stalk and a peripheral stalk. The central stalk, also called rotor shaft, is often seen as part of F(1). The peripheral stalk is seen as part of F(0). F(0) contains the membrane channel next to the rotor. F-type ATP synthases form dimers but each monomer functions independently in ATP generation. The dimer consists of 18 different polypeptides: ATP1 (subunit alpha, part of F(1), 3 molecules per monomer), ATP2 (subunit beta, part of F(1), 3 molecules per monomer), ATP3 (subunit gamma, part of the central stalk), ATP4 (subunit b, part of the peripheral stalk), ATP5/OSCP (subunit 5/OSCP, part of the peripheral stalk), ATP6 (subunit a, part of the peripheral stalk), ATP7 (subunit d, part of the peripheral stalk), ATP8 (subunit 8, part of the peripheral stalk), OLI1 (subunit c, part of the rotor, 10 molecules per monomer), ATP14 (subunit h, part of the peripheral stalk), ATP15 (subunit epsilon, part of the central stalk), ATP16 (subunit delta, part of the central stalk), ATP17 (subunit f, part of the peripheral stalk), ATP18 (subunit i/j, part of the peripheral stalk). Dimer-specific subunits are ATP19 (subunit k, at interface between monomers), ATP20 (subunit g, at interface between monomers), TIM11 (subunit e, at interface between monomers). Also contains subunit L.

The protein localises to the mitochondrion inner membrane. Mitochondrial membrane ATP synthase (F(1)F(0) ATP synthase or Complex V) produces ATP from ADP in the presence of a proton gradient across the membrane which is generated by electron transport complexes of the respiratory chain. F-type ATP synthases consist of two structural domains, F(1) - containing the extramembraneous catalytic core, and F(0) - containing the membrane proton channel, linked together by a central stalk and a peripheral stalk. During catalysis, ATP synthesis in the catalytic domain of F(1) is coupled via a rotary mechanism of the central stalk subunits to proton translocation. Part of the complex F(0) domain. Minor subunit located with subunit a/ATP6 in the membrane. The K chain binds the dimeric form by interacting with the G and E chains. The polypeptide is ATP synthase subunit K, mitochondrial (Pichia angusta (Yeast)).